The sequence spans 230 residues: Acyl-protein thioesterase 1 (230 aa).

Catalysis depends on charge relay system residues serine 119, aspartate 174, and histidine 208. Lysine 224 carries the N6-acetyllysine modification.

This sequence belongs to the AB hydrolase superfamily. AB hydrolase 2 family. In terms of assembly, homodimer. As to expression, platelets.

It localises to the cytoplasm. The protein resides in the cell membrane. Its subcellular location is the nucleus membrane. It is found in the endoplasmic reticulum. It catalyses the reaction S-hexadecanoyl-L-cysteinyl-[protein] + H2O = L-cysteinyl-[protein] + hexadecanoate + H(+). The catalysed reaction is 1-hexadecanoyl-sn-glycero-3-phosphocholine + H2O = sn-glycerol 3-phosphocholine + hexadecanoate + H(+). The enzyme catalyses a 1-(9Z-octadecenoyl)-2-acyl-sn-glycero-3-phosphocholine + H2O = a 2-acyl-sn-glycero-3-phosphocholine + (9Z)-octadecenoate + H(+). With respect to regulation, inhibited by palmostatin-B, leading to impair depalmitoylating of Ras. Its function is as follows. Acts as an acyl-protein thioesterase. Hydrolyzes fatty acids from S-acylated cysteine residues in proteins such as trimeric G alpha proteins or HRAS. Acts as a palmitoyl thioesterase that catalyzes depalmitoylation of proteins, such as ADRB2, KCNMA1 and SQSTM1. Acts as a negative regulator of autophagy by mediating palmitoylation of SQSTM1, decreasing affinity between SQSTM1 and ATG8 proteins and recruitment of ubiquitinated cargo proteins to autophagosomes. Acts as a lysophospholipase and hydrolyzes lysophosphatidylcholine (lyso-PC). Also hydrolyzes lysophosphatidylethanolamine (lyso-PE), lysophosphatidylinositol (lyso-PI) and lysophosphatidylserine (lyso-PS). Has much higher thioesterase activity than lysophospholipase activity. Contributes to the production of lysophosphatidic acid (LPA) during blood coagulation by recognizing and cleaving plasma phospholipids to generate lysophospholipids which in turn act as substrates for ENPP2 to produce LPA. This is Acyl-protein thioesterase 1 (LYPLA1) from Homo sapiens (Human).